The sequence spans 428 residues: Adenylosuccinate synthetase (428 aa).

GTP-binding positions include 12–18 and 40–42; these read GDEGKGK and GHT. The active-site Proton acceptor is Asp13. 2 residues coordinate Mg(2+): Asp13 and Gly40. IMP contacts are provided by residues 13–16, 38–41, Thr130, Arg144, Gln225, Thr240, and Arg304; these read DEGK and NAGH. Residue His41 is the Proton donor of the active site. Position 300–306 (300–306) interacts with substrate; that stretch reads ATTGRPR. GTP is bound by residues Arg306, 332–334, and 415–417; these read KLD and SVG.

This sequence belongs to the adenylosuccinate synthetase family. As to quaternary structure, homodimer. Requires Mg(2+) as cofactor.

Its subcellular location is the cytoplasm. It catalyses the reaction IMP + L-aspartate + GTP = N(6)-(1,2-dicarboxyethyl)-AMP + GDP + phosphate + 2 H(+). Its pathway is purine metabolism; AMP biosynthesis via de novo pathway; AMP from IMP: step 1/2. In terms of biological role, plays an important role in the de novo pathway of purine nucleotide biosynthesis. Catalyzes the first committed step in the biosynthesis of AMP from IMP. This Lawsonia intracellularis (strain PHE/MN1-00) protein is Adenylosuccinate synthetase.